We begin with the raw amino-acid sequence, 653 residues long: UvrABC system protein B (653 aa).

In terms of domain architecture, Helicase ATP-binding spans 25 to 182 (EGIERGVREQ…EKLVELQYKS (158 aa)). 38–45 (GVTGSGKT) contacts ATP. A Beta-hairpin motif is present at residues 91–114 (YYDYYQPEAYIPHSDVYIEKDALI). Residues 429 to 591 (QIADVVNESQ…ITPKSISKSV (163 aa)) enclose the Helicase C-terminal domain. Positions 616–651 (EEDIIKLQKEMLLHAENLEFEKALEIRNQINKLSQH) constitute a UVR domain.

The protein belongs to the UvrB family. In terms of assembly, forms a heterotetramer with UvrA during the search for lesions. Interacts with UvrC in an incision complex.

The protein resides in the cytoplasm. Functionally, the UvrABC repair system catalyzes the recognition and processing of DNA lesions. A damage recognition complex composed of 2 UvrA and 2 UvrB subunits scans DNA for abnormalities. Upon binding of the UvrA(2)B(2) complex to a putative damaged site, the DNA wraps around one UvrB monomer. DNA wrap is dependent on ATP binding by UvrB and probably causes local melting of the DNA helix, facilitating insertion of UvrB beta-hairpin between the DNA strands. Then UvrB probes one DNA strand for the presence of a lesion. If a lesion is found the UvrA subunits dissociate and the UvrB-DNA preincision complex is formed. This complex is subsequently bound by UvrC and the second UvrB is released. If no lesion is found, the DNA wraps around the other UvrB subunit that will check the other stand for damage. This Anaplasma phagocytophilum (strain HZ) protein is UvrABC system protein B.